The chain runs to 735 residues: Rho GTPase-activating protein SYDE1 (735 aa).

Disordered regions lie at residues methionine 1–valine 253, proline 601–tryptophan 655, and phenylalanine 669–proline 706. The span at arginine 14–valine 47 shows a compositional bias: basic and acidic residues. Low complexity predominate over residues proline 151–proline 160. Phosphoserine is present on residues serine 224, serine 231, serine 235, and serine 244. Residues arginine 249–alanine 366 form the C2 domain. One can recognise a Rho-GAP domain in the interval leucine 398–arginine 604. A compositionally biased stretch (basic and acidic residues) spans phenylalanine 669 to threonine 679. Serine 681 and serine 683 each carry phosphoserine.

In terms of processing, palmitoylated. Probably palmitoylated by ZDHHC3 and ZDHHC7.

Functionally, GTPase activator for the Rho-type GTPases. As a GCM1 downstream effector, it is involved in placental development and positively regulates trophoblast cells migration. It regulates cytoskeletal remodeling by controlling the activity of Rho GTPases including RHOA, CDC42 and RAC1. This is Rho GTPase-activating protein SYDE1 (Syde1) from Rattus norvegicus (Rat).